Here is a 178-residue protein sequence, read N- to C-terminus: Ribosome maturation factor RimM (178 aa).

Residues alanine 101–phenylalanine 178 enclose the PRC barrel domain.

The protein belongs to the RimM family. In terms of assembly, binds ribosomal protein uS19.

The protein localises to the cytoplasm. Its function is as follows. An accessory protein needed during the final step in the assembly of 30S ribosomal subunit, possibly for assembly of the head region. Essential for efficient processing of 16S rRNA. May be needed both before and after RbfA during the maturation of 16S rRNA. It has affinity for free ribosomal 30S subunits but not for 70S ribosomes. The chain is Ribosome maturation factor RimM from Pseudomonas putida (strain GB-1).